The sequence spans 438 residues: Adenylosuccinate synthetase (438 aa).

GTP is bound by residues 13-19 (GDEGKGK) and 41-43 (GHT). The active-site Proton acceptor is aspartate 14. Mg(2+) is bound by residues aspartate 14 and glycine 41. Residues 14 to 17 (DEGK), 39 to 42 (NAGH), threonine 130, arginine 144, glutamine 225, threonine 240, and arginine 310 contribute to the IMP site. Histidine 42 acts as the Proton donor in catalysis. Position 306 to 312 (306 to 312 (ATTGRLR)) interacts with substrate. GTP is bound by residues arginine 312, 338–340 (KLD), and 421–423 (STG).

The protein belongs to the adenylosuccinate synthetase family. Homodimer. Requires Mg(2+) as cofactor.

The protein resides in the cytoplasm. The enzyme catalyses IMP + L-aspartate + GTP = N(6)-(1,2-dicarboxyethyl)-AMP + GDP + phosphate + 2 H(+). It participates in purine metabolism; AMP biosynthesis via de novo pathway; AMP from IMP: step 1/2. In terms of biological role, plays an important role in the de novo pathway of purine nucleotide biosynthesis. Catalyzes the first committed step in the biosynthesis of AMP from IMP. This Vibrio vulnificus (strain YJ016) protein is Adenylosuccinate synthetase.